A 64-amino-acid polypeptide reads, in one-letter code: UPF0370 protein YE1145 (64 aa).

A helical membrane pass occupies residues 3 to 23 (WLADYWWVVLIILVGMILNGI). A disordered region spans residues 36-64 (SNKPEIPPHRDNNAQWDDDDDWPDKDKKK).

Belongs to the UPF0370 family.

Its subcellular location is the cell membrane. This chain is UPF0370 protein YE1145, found in Yersinia enterocolitica serotype O:8 / biotype 1B (strain NCTC 13174 / 8081).